The following is a 486-amino-acid chain: Glutamyl-tRNA(Gln) amidotransferase subunit A (486 aa).

Active-site charge relay system residues include lysine 78 and serine 153. The active-site Acyl-ester intermediate is serine 177.

Belongs to the amidase family. GatA subfamily. In terms of assembly, heterotrimer of A, B and C subunits.

The catalysed reaction is L-glutamyl-tRNA(Gln) + L-glutamine + ATP + H2O = L-glutaminyl-tRNA(Gln) + L-glutamate + ADP + phosphate + H(+). Its function is as follows. Allows the formation of correctly charged Gln-tRNA(Gln) through the transamidation of misacylated Glu-tRNA(Gln) in organisms which lack glutaminyl-tRNA synthetase. The reaction takes place in the presence of glutamine and ATP through an activated gamma-phospho-Glu-tRNA(Gln). The polypeptide is Glutamyl-tRNA(Gln) amidotransferase subunit A (Desulfosudis oleivorans (strain DSM 6200 / JCM 39069 / Hxd3) (Desulfococcus oleovorans)).